The following is an 87-amino-acid chain: Large ribosomal subunit protein bL27 (87 aa).

The tract at residues 1 to 21 is disordered; sequence MAHKKAGGSSRNGRDSESKRL.

This sequence belongs to the bacterial ribosomal protein bL27 family.

This is Large ribosomal subunit protein bL27 from Paraburkholderia xenovorans (strain LB400).